Reading from the N-terminus, the 317-residue chain is Lipoyl synthase (317 aa).

Positions 1-22 (MVTVVNTLNRPRHPEKQNRPET) are disordered. Residues 12–22 (RHPEKQNRPET) are compositionally biased toward basic and acidic residues. [4Fe-4S] cluster-binding residues include cysteine 57, cysteine 62, cysteine 68, cysteine 83, cysteine 87, cysteine 90, and serine 296. Positions 69–285 (WEKKHATFMI…ETVAYAKGFL (217 aa)) constitute a Radical SAM core domain.

This sequence belongs to the radical SAM superfamily. Lipoyl synthase family. Requires [4Fe-4S] cluster as cofactor.

It localises to the cytoplasm. The enzyme catalyses [[Fe-S] cluster scaffold protein carrying a second [4Fe-4S](2+) cluster] + N(6)-octanoyl-L-lysyl-[protein] + 2 oxidized [2Fe-2S]-[ferredoxin] + 2 S-adenosyl-L-methionine + 4 H(+) = [[Fe-S] cluster scaffold protein] + N(6)-[(R)-dihydrolipoyl]-L-lysyl-[protein] + 4 Fe(3+) + 2 hydrogen sulfide + 2 5'-deoxyadenosine + 2 L-methionine + 2 reduced [2Fe-2S]-[ferredoxin]. The protein operates within protein modification; protein lipoylation via endogenous pathway; protein N(6)-(lipoyl)lysine from octanoyl-[acyl-carrier-protein]: step 2/2. Catalyzes the radical-mediated insertion of two sulfur atoms into the C-6 and C-8 positions of the octanoyl moiety bound to the lipoyl domains of lipoate-dependent enzymes, thereby converting the octanoylated domains into lipoylated derivatives. The protein is Lipoyl synthase of Azorhizobium caulinodans (strain ATCC 43989 / DSM 5975 / JCM 20966 / LMG 6465 / NBRC 14845 / NCIMB 13405 / ORS 571).